The sequence spans 96 residues: Small ribosomal subunit protein bS18 (96 aa).

Belongs to the bacterial ribosomal protein bS18 family. As to quaternary structure, part of the 30S ribosomal subunit. Forms a tight heterodimer with protein bS6.

Its function is as follows. Binds as a heterodimer with protein bS6 to the central domain of the 16S rRNA, where it helps stabilize the platform of the 30S subunit. The protein is Small ribosomal subunit protein bS18 of Borreliella burgdorferi (strain ATCC 35210 / DSM 4680 / CIP 102532 / B31) (Borrelia burgdorferi).